The chain runs to 947 residues: Protein translocase subunit SecA 1 (947 aa).

ATP is bound by residues glutamine 83, 101–105 (GEGKT), and aspartate 490. The segment at 860-947 (AKAQEQTGQG…KTSKPTRRRG (88 aa)) is disordered. Residues 925–934 (TRRERREAAR) are compositionally biased toward basic and acidic residues. Residues 935-947 (KQAKTSKPTRRRG) are compositionally biased toward basic residues.

It belongs to the SecA family. Monomer and homodimer. Part of the essential Sec protein translocation apparatus which comprises SecA, SecYEG and auxiliary proteins SecDF. Other proteins may also be involved.

The protein localises to the cell membrane. It is found in the cytoplasm. It catalyses the reaction ATP + H2O + cellular proteinSide 1 = ADP + phosphate + cellular proteinSide 2.. Part of the Sec protein translocase complex. Interacts with the SecYEG preprotein conducting channel. Has a central role in coupling the hydrolysis of ATP to the transfer of proteins into and across the cell membrane, serving as an ATP-driven molecular motor driving the stepwise translocation of polypeptide chains across the membrane. The polypeptide is Protein translocase subunit SecA 1 (Mycobacterium sp. (strain KMS)).